Consider the following 601-residue polypeptide: Ubiquitin carboxyl-terminal hydrolase MINDY-2 (601 aa).

Positions M1–A205 are disordered. Residues E24–E34 are compositionally biased toward basic and acidic residues. T62 is subject to Phosphothreonine. Residue S82 is modified to Phosphoserine. Composition is skewed to low complexity over residues E127 to E141, S148 to F169, and G186 to P195. Catalysis depends on C244, which acts as the Nucleophile. H426 functions as the Proton acceptor in the catalytic mechanism. The interval G485–Q537 is ubiquitin-binding domain (UBD). The tract at residues R534–L601 is disordered. Residues S536–S570 are compositionally biased toward low complexity. A compositionally biased stretch (basic and acidic residues) spans S577 to L601.

It belongs to the MINDY deubiquitinase family. FAM63 subfamily.

The enzyme catalyses Thiol-dependent hydrolysis of ester, thioester, amide, peptide and isopeptide bonds formed by the C-terminal Gly of ubiquitin (a 76-residue protein attached to proteins as an intracellular targeting signal).. Its function is as follows. Hydrolase that can remove 'Lys-48'-linked conjugated ubiquitin from proteins. Can also bind to polyubiquitin chains of different linkage types, including 'Lys-6', 'Lys-11', 'Lys-29', 'Lys-33' and 'Lys-63'. May play a regulatory role at the level of protein turnover. This chain is Ubiquitin carboxyl-terminal hydrolase MINDY-2 (Mindy2), found in Mus musculus (Mouse).